The following is a 126-amino-acid chain: Urease subunit beta (126 aa).

The protein belongs to the urease beta subunit family. In terms of assembly, heterotrimer of UreA (gamma), UreB (beta) and UreC (alpha) subunits. Three heterotrimers associate to form the active enzyme.

The protein resides in the cytoplasm. The enzyme catalyses urea + 2 H2O + H(+) = hydrogencarbonate + 2 NH4(+). Its pathway is nitrogen metabolism; urea degradation; CO(2) and NH(3) from urea (urease route): step 1/1. This is Urease subunit beta from Haloquadratum walsbyi (strain DSM 16790 / HBSQ001).